An 89-amino-acid polypeptide reads, in one-letter code: Small ribosomal subunit protein uS17 (89 aa).

Belongs to the universal ribosomal protein uS17 family. In terms of assembly, part of the 30S ribosomal subunit.

One of the primary rRNA binding proteins, it binds specifically to the 5'-end of 16S ribosomal RNA. This is Small ribosomal subunit protein uS17 from Stenotrophomonas maltophilia (strain K279a).